We begin with the raw amino-acid sequence, 186 residues long: Imidazoleglycerol-phosphate dehydratase (186 aa).

This sequence belongs to the imidazoleglycerol-phosphate dehydratase family.

It is found in the cytoplasm. It carries out the reaction D-erythro-1-(imidazol-4-yl)glycerol 3-phosphate = 3-(imidazol-4-yl)-2-oxopropyl phosphate + H2O. Its pathway is amino-acid biosynthesis; L-histidine biosynthesis; L-histidine from 5-phospho-alpha-D-ribose 1-diphosphate: step 6/9. The protein is Imidazoleglycerol-phosphate dehydratase of Dictyoglomus thermophilum (strain ATCC 35947 / DSM 3960 / H-6-12).